Here is a 233-residue protein sequence, read N- to C-terminus: MEKTMSNSTPTPAAHRLGLVGRKVGMTRIFTEDGESIPVTVLDVSNNRVTQVKSLESDGYAAIQVTYGTRRATRVVKPQAGHYAKAGAEAGSILKEFRLDPARAAEFAAGAVIAVESVFEAGQQVDVTGTSIGKGFAGTIKRHNFGSQRASHGNSRSHRVPGSIGQAQDPGRIFPGKRMSGHMGDVTRTVQNLDVVRVDAERGLLMVKGAVPGHAGGDVIVRPAVKAPAKKGA.

Positions 146 to 171 (GSQRASHGNSRSHRVPGSIGQAQDPG) are disordered. Residue glutamine 168 is modified to N5-methylglutamine.

Belongs to the universal ribosomal protein uL3 family. As to quaternary structure, part of the 50S ribosomal subunit. Forms a cluster with proteins L14 and L19. Methylated by PrmB.

In terms of biological role, one of the primary rRNA binding proteins, it binds directly near the 3'-end of the 23S rRNA, where it nucleates assembly of the 50S subunit. The polypeptide is Large ribosomal subunit protein uL3 (Bordetella bronchiseptica (strain ATCC BAA-588 / NCTC 13252 / RB50) (Alcaligenes bronchisepticus)).